The primary structure comprises 161 residues: MTRGPVRLDVAISYALPRAGLPAAVSFRRWVAAALKGRIREADLAIRVVDAKEGQSLNRHYRGKDYATNVLSFPAEVPEGLPKGVKFPLLGDLVICAPVVAREADEQGKALNAHYAHLTVHGVLHLLGWDHEDDKEAEAMEQLEREILAELGIDDPYAGER.

Positions 121, 125, and 131 each coordinate Zn(2+).

The protein belongs to the endoribonuclease YbeY family. Zn(2+) is required as a cofactor.

It is found in the cytoplasm. Functionally, single strand-specific metallo-endoribonuclease involved in late-stage 70S ribosome quality control and in maturation of the 3' terminus of the 16S rRNA. This chain is Endoribonuclease YbeY, found in Stenotrophomonas maltophilia (strain K279a).